Consider the following 234-residue polypeptide: tRNA (guanine-N(1)-)-methyltransferase (234 aa).

S-adenosyl-L-methionine is bound by residues Gly-112 and 132 to 137 (IGDFIL).

It belongs to the RNA methyltransferase TrmD family. As to quaternary structure, homodimer.

The protein localises to the cytoplasm. The enzyme catalyses guanosine(37) in tRNA + S-adenosyl-L-methionine = N(1)-methylguanosine(37) in tRNA + S-adenosyl-L-homocysteine + H(+). In terms of biological role, specifically methylates guanosine-37 in various tRNAs. The polypeptide is tRNA (guanine-N(1)-)-methyltransferase (Campylobacter jejuni subsp. jejuni serotype O:6 (strain 81116 / NCTC 11828)).